Reading from the N-terminus, the 333-residue chain is Probable tRNA pseudouridine synthase B (333 aa).

The Nucleophile role is filled by aspartate 66. One can recognise a PUA domain in the interval 233–308 (LKKIIVKDSA…EVVEITRVIM (76 aa)).

It belongs to the pseudouridine synthase TruB family. Type 2 subfamily.

It catalyses the reaction uridine(55) in tRNA = pseudouridine(55) in tRNA. Functionally, could be responsible for synthesis of pseudouridine from uracil-55 in the psi GC loop of transfer RNAs. The polypeptide is Probable tRNA pseudouridine synthase B (Methanococcus maripaludis (strain C6 / ATCC BAA-1332)).